The chain runs to 767 residues: Glucoamylase S1 (767 aa).

A signal peptide spans 1 to 21 (MQRPFLLAYLVLSLLFNSALG). Disordered regions lie at residues 29 to 83 (RGSS…ETTI) and 125 to 149 (TTTVPCSTSPSETASESTTTSPTTP). Residues 30–48 (GSSSSNITSSGPSSTPFSS) are compositionally biased toward low complexity. N-linked (GlcNAc...) asparagine glycosylation is present at Asn35. Polar residues predominate over residues 49 to 66 (ATESFSTGTTVTPSSSKY). 2 stretches are compositionally biased toward low complexity: residues 71-83 (TETSVSSTTETTI) and 131-149 (STSPSETASESTTTSPTTP). Residues Asn308, Asn322, Asn414, Asn423, and Asn434 are each glycosylated (N-linked (GlcNAc...) asparagine). The segment at 348–691 (VSIERIFENI…ASTTLYQLIY (344 aa)) is h subunit. A substrate-binding site is contributed by Trp455. Asn513 is a glycosylation site (N-linked (GlcNAc...) asparagine). Asp518 serves as the catalytic Proton acceptor. The active-site Proton donor is Glu521. Asn546, Asn645, Asn650, Asn720, and Asn741 each carry an N-linked (GlcNAc...) asparagine glycan. The segment at 692-767 (RHISEQHDLV…LKATWEQTGN (76 aa)) is y subunit.

The protein belongs to the glycosyl hydrolase 15 family.

The enzyme catalyses Hydrolysis of terminal (1-&gt;4)-linked alpha-D-glucose residues successively from non-reducing ends of the chains with release of beta-D-glucose.. The protein is Glucoamylase S1 (STA1) of Saccharomyces cerevisiae (Baker's yeast).